The following is a 532-amino-acid chain: CTP synthase (532 aa).

Residues 1 to 267 are amidoligase domain; it reads MAKFVFVTGG…HGLVLDQLQI (267 aa). Serine 13 provides a ligand contact to CTP. Serine 13 serves as a coordination point for UTP. 14–19 contributes to the ATP binding site; the sequence is GLGKGI. Position 54 (tyrosine 54) interacts with L-glutamine. An ATP-binding site is contributed by aspartate 71. Mg(2+) is bound by residues aspartate 71 and glutamate 141. Residues 148 to 150, 188 to 193, and lysine 224 each bind CTP; these read DIE and KTKPIQ. UTP contacts are provided by residues 188–193 and lysine 224; that span reads KTKPIQ. The region spanning 292-532 is the Glutamine amidotransferase type-1 domain; that stretch reads EVTFVGKYIE…GFVEAIVNNK (241 aa). Glycine 354 contributes to the L-glutamine binding site. Cysteine 381 functions as the Nucleophile; for glutamine hydrolysis in the catalytic mechanism. L-glutamine is bound by residues 382-385, glutamate 405, and arginine 462; that span reads LGMQ. Active-site residues include histidine 507 and glutamate 509.

This sequence belongs to the CTP synthase family. In terms of assembly, homotetramer.

The enzyme catalyses UTP + L-glutamine + ATP + H2O = CTP + L-glutamate + ADP + phosphate + 2 H(+). The catalysed reaction is L-glutamine + H2O = L-glutamate + NH4(+). It carries out the reaction UTP + NH4(+) + ATP = CTP + ADP + phosphate + 2 H(+). It functions in the pathway pyrimidine metabolism; CTP biosynthesis via de novo pathway; CTP from UDP: step 2/2. Allosterically activated by GTP, when glutamine is the substrate; GTP has no effect on the reaction when ammonia is the substrate. The allosteric effector GTP functions by stabilizing the protein conformation that binds the tetrahedral intermediate(s) formed during glutamine hydrolysis. Inhibited by the product CTP, via allosteric rather than competitive inhibition. Functionally, catalyzes the ATP-dependent amination of UTP to CTP with either L-glutamine or ammonia as the source of nitrogen. Regulates intracellular CTP levels through interactions with the four ribonucleotide triphosphates. This Mesoplasma florum (strain ATCC 33453 / NBRC 100688 / NCTC 11704 / L1) (Acholeplasma florum) protein is CTP synthase.